The primary structure comprises 343 residues: Mating-type protein MAT-2 (343 aa).

2 disordered regions span residues 98–117 (RSPQ…SEQT) and 177–223 (KKPW…AAMT). Positions 99–117 (SPQVVSSPQSAQTSPSEQT) are enriched in low complexity. A DNA-binding region (HMG box) is located at residues 131-199 (APRPMNCWII…EHLRQHPNYK (69 aa)). The segment covering 206 to 218 (GEKKKRQSRKSKR) has biased composition (basic residues).

It is found in the nucleus. In Cochliobolus heterostrophus (Southern corn leaf blight fungus), this protein is Mating-type protein MAT-2 (MAT2).